The following is a 212-amino-acid chain: Pyridoxine/pyridoxamine 5'-phosphate oxidase (212 aa).

FMN-binding positions include 61–66 (RTVLLK), 76–77 (FT), K82, K83, and Q105. K66 contacts substrate. The substrate site is built by Y123, R127, and S131. FMN contacts are provided by residues 140 to 141 (QS) and W185. 191–193 (RLH) lines the substrate pocket. R195 lines the FMN pocket.

Belongs to the pyridoxamine 5'-phosphate oxidase family. As to quaternary structure, homodimer. Requires FMN as cofactor.

It catalyses the reaction pyridoxamine 5'-phosphate + O2 + H2O = pyridoxal 5'-phosphate + H2O2 + NH4(+). The catalysed reaction is pyridoxine 5'-phosphate + O2 = pyridoxal 5'-phosphate + H2O2. Its pathway is cofactor metabolism; pyridoxal 5'-phosphate salvage; pyridoxal 5'-phosphate from pyridoxamine 5'-phosphate: step 1/1. It participates in cofactor metabolism; pyridoxal 5'-phosphate salvage; pyridoxal 5'-phosphate from pyridoxine 5'-phosphate: step 1/1. Functionally, catalyzes the oxidation of either pyridoxine 5'-phosphate (PNP) or pyridoxamine 5'-phosphate (PMP) into pyridoxal 5'-phosphate (PLP). In Vesicomyosocius okutanii subsp. Calyptogena okutanii (strain HA), this protein is Pyridoxine/pyridoxamine 5'-phosphate oxidase.